Consider the following 539-residue polypeptide: Chaperonin GroEL 2 (539 aa).

ATP-binding positions include 29–32, 86–90, G413, 477–479, and D493; these read TLGP, DGTTT, and NAA. Positions 519–539 are disordered; the sequence is VVDKPEEEDSAAAGHGHGHSH.

Belongs to the chaperonin (HSP60) family. Forms a cylinder of 14 subunits composed of two heptameric rings stacked back-to-back. Interacts with the co-chaperonin GroES.

It is found in the cytoplasm. The catalysed reaction is ATP + H2O + a folded polypeptide = ADP + phosphate + an unfolded polypeptide.. Functionally, together with its co-chaperonin GroES, plays an essential role in assisting protein folding. The GroEL-GroES system forms a nano-cage that allows encapsulation of the non-native substrate proteins and provides a physical environment optimized to promote and accelerate protein folding. This is Chaperonin GroEL 2 from Saccharopolyspora erythraea (strain ATCC 11635 / DSM 40517 / JCM 4748 / NBRC 13426 / NCIMB 8594 / NRRL 2338).